A 187-amino-acid polypeptide reads, in one-letter code: uncharacterized protein (187 aa).

This is an uncharacterized protein from Homo sapiens (Human).